The sequence spans 430 residues: Potassium channel subfamily K member 12 (430 aa).

Topologically, residues 1-38 (MSSRSPRPPPRRSRRRLPRPSCCCCCCRRSHLNEDTGR) are cytoplasmic. Positions 11–16 (RRSRRR) are ER retention/retrieval signal. Residues 39–59 (FVLLAALIGLYLVAGATVFSA) traverse the membrane as a helical segment. An N-linked (GlcNAc...) asparagine glycan is attached at asparagine 78. Positions 114–134 (WDFPGAFYFVGTVVSTIGFGM) form an intramembrane region, pore-forming. Positions 129, 130, and 131 each coordinate K(+). The segment at 129 to 134 (TIGFGM) is selectivity filter 1. A helical membrane pass occupies residues 145–165 (FLIAYGLFGCAGTILFFNLFL). At 166–212 (ERIISLLAFIMRACRERQLRRSGLLPATFRRGSALSEADSLAGWKPS) the chain is on the cytoplasmic side. Residues 213–233 (VYHVLLILGLFAVLLSCCASA) form a helical membrane-spanning segment. The pore-forming intramembrane region spans 243–263 (YVDSLYFCFVTFSTIGFGDLV). Residues threonine 256, isoleucine 257, glycine 258, and phenylalanine 259 each coordinate K(+). Residues 256–261 (TIGFGD) are selectivity filter 2. The chain crosses the membrane as a helical span at residues 282-302 (LFILLGVCCIYSLFNVISILI). Topologically, residues 303–430 (KQVLNWMLRK…NRLAETSASR (128 aa)) are cytoplasmic.

Belongs to the two pore domain potassium channel (TC 1.A.1.8) family. Homodimer. Heterodimer with KCNK13.

The protein localises to the cell membrane. The protein resides in the endoplasmic reticulum membrane. The enzyme catalyses K(+)(in) = K(+)(out). K(+) channel subunit that may homo- and heterodimerize to form functional channels with distinct regulatory and gating properties. Can heterodimerize with KCNK13 subunit to conduct K(+) outward rectifying currents at the plasma membrane. The homodimers are mainly retained in the endoplasmic reticulum compartment and may be targeted to the cell surface upon phosphorylation or other activation signals yet to be elucidated. This is Potassium channel subfamily K member 12 from Homo sapiens (Human).